A 300-amino-acid polypeptide reads, in one-letter code: Recombination-associated protein RdgC (300 aa).

The protein belongs to the RdgC family.

The protein resides in the cytoplasm. The protein localises to the nucleoid. Functionally, may be involved in recombination. This Herminiimonas arsenicoxydans protein is Recombination-associated protein RdgC.